Consider the following 547-residue polypeptide: MKEIVTLTNVSYEVKDQTVFKHVNASVQQGDIIGIIGKNGAGKSTLLHLIHNDLAPAQGQILRKDIKLALVEQETAAYSFADQTPAEKKLLEKWHVPLRDFHQLSGGEKLKARLAKGLSEDADLLLLDEPTNHLDEKSLQFLIQQLKHYNGTVILVSHDRYFLDEAATKIWSLEDQTLIEFKGNYSGYMKFREKKRLTQQREYEKQQKMVERIEAQMNGLASWSEKAHAQSTKKEGFKEYHRVKAKRTDAQIKSKQKRLEKELEKAKAEPVTPEYTVRFSIDTTHKTGKRFLEVQNVTKAFGERTLFKNANFTIQHGEKVAIIGPNGSGKTTLLNIILGQETAEGSVWVSPSANIGYLTQEVFDLPLEQTPEELFENETFKARGHVQNLMRHLGFTAAQWTEPIKHMSMGERVKIKLMAYILEEKDVLILDEPTNHLDLPSREQLEETLSQYSGTLLAVSHDRYFLEKTTNSKLVISNNGIEKQLNDVPSERNEREELRLKLETERQEVLGKLSFMTPNDKGYKELDQAFNELTKRIKELDHQDKKD.

One can recognise an ABC transporter 1 domain in the interval 5–200; sequence VTLTNVSYEV…FREKKRLTQQ (196 aa). 37-44 contributes to the ATP binding site; sequence GKNGAGKS. An antibiotic resistance domain (ARD) region spans residues 183 to 289; that stretch reads GNYSGYMKFR…SIDTTHKTGK (107 aa). Coiled coils occupy residues 193–222 and 245–269; these read EKKR…GLAS and AKRT…AKAE. Residues 292 to 504 enclose the ABC transporter 2 domain; that stretch reads LEVQNVTKAF…REELRLKLET (213 aa). 324-331 lines the ATP pocket; the sequence is GPNGSGKT. Residues 483–547 form a C-terminal extension (CTE) region; sequence KQLNDVPSER…KELDHQDKKD (65 aa). Positions 488–543 form a coiled coil; the sequence is VPSERNEREELRLKLETERQEVLGKLSFMTPNDKGYKELDQAFNELTKRIKELDHQ.

It belongs to the ABC transporter superfamily. ABCF family. ARE2 subfamily. As to quaternary structure, binds within the E-site of the 70S ribosome, where it contacts ribosomal proteins L1, L5, L33-1, S7, S11, the 16 and 23S rRNAs and the acceptor arm of the P-site tRNA.

The protein localises to the cytoplasm. In terms of biological role, recognizes and binds in the vacant E-site of ribosomes stalled by some peptidyltransferase center (PTC)-targeting antibiotics. Makes contact with the PTC and both ribosomal subunits. Induces conformational changes in the P-site, which allows it to dislodge the antibiotic from its PTC binding site. Binds to ribosomes either directly following translation initation or subsequent to E tRNA release during elongation. Involved in resistance to a narrow spectrum of antibiotics (the streptogramin A antibiotic virginiamycin M, the lincosamide antibiotic lincomycin and the pleuromutilin antibiotic tiamulin). In Bacillus subtilis (strain 168), this protein is Ribosome protection protein VmlR.